We begin with the raw amino-acid sequence, 143 residues long: Cytochrome c-type biogenesis protein CcmE (143 aa).

Residues 1–8 (MTPVRRRK) are Cytoplasmic-facing. Residues 9–29 (LFILLFALSVLSAAAALVLYA) traverse the membrane as a helical; Signal-anchor for type II membrane protein segment. Over 30–143 (LRQNISLFYT…KSALADKVKQ (114 aa)) the chain is Periplasmic. 2 residues coordinate heme: histidine 124 and tyrosine 128.

The protein belongs to the CcmE/CycJ family.

It localises to the cell inner membrane. Heme chaperone required for the biogenesis of c-type cytochromes. Transiently binds heme delivered by CcmC and transfers the heme to apo-cytochromes in a process facilitated by CcmF and CcmH. The sequence is that of Cytochrome c-type biogenesis protein CcmE from Legionella pneumophila (strain Lens).